We begin with the raw amino-acid sequence, 629 residues long: Coiled-coil domain-containing protein 120 (629 aa).

The tract at residues 31–70 (RLRGLLDRQRALQEALSVKLQELRKVCLQEAELTGQLPPE) is involved in CYTH2-binding. The stretch at 109 to 173 (ELALEALERE…LRDFRARLGL (65 aa)) forms a coiled coil. 2 stretches are compositionally biased toward low complexity: residues 209–219 (HSESSSLSESG) and 279–294 (ASPTSPTRSLPRSASS). The segment at 209-356 (HSESSSLSES…LFAARTRRSN (148 aa)) is disordered. Positions 323 to 332 (RQWSGSQDSQ) are enriched in polar residues. Phosphoserine is present on residues Ser-355 and Ser-357. 2 disordered regions span residues 399 to 432 (QPVPSFSSRTTGPPDPPRAARPSSAAPASRGAPR) and 602 to 629 (PSQAPLPHSRSFTAPPVSGRYGGAFTDG). Over residues 418–432 (ARPSSAAPASRGAPR) the composition is skewed to low complexity. Omega-N-methylarginine is present on Arg-432.

As to quaternary structure, interacts with NIN and CEP170; leading to recruit them to centrosomes. Interacts with CYTH2; this interaction is direct and stabilizes CCDC120, possibly by preventing ubiquitination. Ubiquitinated; interaction with CYTH2 may prevent ubiquitination.

The protein localises to the cytoplasm. Its subcellular location is the cytoskeleton. The protein resides in the microtubule organizing center. It localises to the centrosome. It is found in the centriole. The protein localises to the cell projection. Its subcellular location is the neuron projection. The protein resides in the growth cone. It localises to the endosome. In terms of biological role, centriolar protein required for centriole subdistal appendage assembly and microtubule anchoring in interphase cells. Together with CCDC68, cooperate with subdistal appendage components ODF2, NIN and CEP170 for hierarchical subdistal appendage assembly. Recruits NIN and CEP170 to centrosomes. Also required for neurite growth. Localizes CYTH2 to vesicles to allow its transport along neurites, and subsequent ARF6 activation and neurite growth. This is Coiled-coil domain-containing protein 120 from Mus musculus (Mouse).